The chain runs to 635 residues: 1-deoxy-D-xylulose-5-phosphate synthase (635 aa).

Thiamine diphosphate contacts are provided by residues His77 and 118–120 (GHA). Asp150 provides a ligand contact to Mg(2+). Residues 151-152 (AS), Asn179, Tyr290, and Glu372 contribute to the thiamine diphosphate site. Asn179 provides a ligand contact to Mg(2+).

Belongs to the transketolase family. DXPS subfamily. As to quaternary structure, homodimer. Mg(2+) serves as cofactor. Thiamine diphosphate is required as a cofactor.

It catalyses the reaction D-glyceraldehyde 3-phosphate + pyruvate + H(+) = 1-deoxy-D-xylulose 5-phosphate + CO2. It functions in the pathway metabolic intermediate biosynthesis; 1-deoxy-D-xylulose 5-phosphate biosynthesis; 1-deoxy-D-xylulose 5-phosphate from D-glyceraldehyde 3-phosphate and pyruvate: step 1/1. In terms of biological role, catalyzes the acyloin condensation reaction between C atoms 2 and 3 of pyruvate and glyceraldehyde 3-phosphate to yield 1-deoxy-D-xylulose-5-phosphate (DXP). The polypeptide is 1-deoxy-D-xylulose-5-phosphate synthase (Leptospira borgpetersenii serovar Hardjo-bovis (strain JB197)).